The primary structure comprises 504 residues: Maturase K (504 aa).

The protein belongs to the intron maturase 2 family. MatK subfamily.

The protein resides in the plastid. The protein localises to the chloroplast. Usually encoded in the trnK tRNA gene intron. Probably assists in splicing its own and other chloroplast group II introns. This is Maturase K from Alliaria petiolata (Garlic mustard).